The chain runs to 308 residues: Tyrosine recombinase XerC (308 aa).

Residues serine 20–glutamine 101 form the Core-binding (CB) domain. Residues aspartate 122–asparagine 302 enclose the Tyr recombinase domain. Residues arginine 163, lysine 187, histidine 254, arginine 257, and histidine 280 contribute to the active site. Tyrosine 289 functions as the O-(3'-phospho-DNA)-tyrosine intermediate in the catalytic mechanism.

Belongs to the 'phage' integrase family. XerC subfamily. In terms of assembly, forms a cyclic heterotetrameric complex composed of two molecules of XerC and two molecules of XerD.

The protein localises to the cytoplasm. Site-specific tyrosine recombinase, which acts by catalyzing the cutting and rejoining of the recombining DNA molecules. The XerC-XerD complex is essential to convert dimers of the bacterial chromosome into monomers to permit their segregation at cell division. It also contributes to the segregational stability of plasmids. This chain is Tyrosine recombinase XerC, found in Corynebacterium glutamicum (strain ATCC 13032 / DSM 20300 / JCM 1318 / BCRC 11384 / CCUG 27702 / LMG 3730 / NBRC 12168 / NCIMB 10025 / NRRL B-2784 / 534).